The following is a 286-amino-acid chain: Putative chaperone BssE (286 aa).

Residues 47 to 54 (GKQGCGKS) and 108 to 115 (GCVIHLEE) contribute to the ATP site.

It belongs to the CbbQ/NirQ/NorQ/GpvN family.

In terms of biological role, may have a role in assembly and/or activation of benzylsuccinate synthase. This chain is Putative chaperone BssE (bssE), found in Thauera aromatica.